We begin with the raw amino-acid sequence, 87 residues long: Acylphosphatase (87 aa).

Residues 2–87 (RLTALVSGHV…ETGLREFHIY (86 aa)) enclose the Acylphosphatase-like domain. Catalysis depends on residues Arg17 and Asn35.

This sequence belongs to the acylphosphatase family.

The catalysed reaction is an acyl phosphate + H2O = a carboxylate + phosphate + H(+). This is Acylphosphatase (acyP) from Deinococcus radiodurans (strain ATCC 13939 / DSM 20539 / JCM 16871 / CCUG 27074 / LMG 4051 / NBRC 15346 / NCIMB 9279 / VKM B-1422 / R1).